A 186-amino-acid polypeptide reads, in one-letter code: Elongation factor P (186 aa).

Belongs to the elongation factor P family.

It localises to the cytoplasm. It functions in the pathway protein biosynthesis; polypeptide chain elongation. In terms of biological role, involved in peptide bond synthesis. Stimulates efficient translation and peptide-bond synthesis on native or reconstituted 70S ribosomes in vitro. Probably functions indirectly by altering the affinity of the ribosome for aminoacyl-tRNA, thus increasing their reactivity as acceptors for peptidyl transferase. The polypeptide is Elongation factor P (Shewanella piezotolerans (strain WP3 / JCM 13877)).